A 41-amino-acid polypeptide reads, in one-letter code: Large ribosomal subunit protein bL36 (41 aa).

This sequence belongs to the bacterial ribosomal protein bL36 family.

The protein is Large ribosomal subunit protein bL36 of Jannaschia sp. (strain CCS1).